The following is a 55-amino-acid chain: Locustin (55 aa).

4 disulfides stabilise this stretch: Cys-5–Cys-40, Cys-7–Cys-36, Cys-10–Cys-32, and Cys-17–Cys-54.

Monomer. In terms of tissue distribution, stored in hemocyte granules and secreted into the hemolymph.

The protein localises to the secreted. Functionally, has antibacterial activity against Gram-positive bacterium M.luteus. The chain is Locustin from Locusta migratoria (Migratory locust).